We begin with the raw amino-acid sequence, 447 residues long: UDP-N-acetylmuramate--L-alanine ligase (447 aa).

Position 107–113 (107–113) interacts with ATP; it reads GTHGKTT.

The protein belongs to the MurCDEF family.

It localises to the cytoplasm. The enzyme catalyses UDP-N-acetyl-alpha-D-muramate + L-alanine + ATP = UDP-N-acetyl-alpha-D-muramoyl-L-alanine + ADP + phosphate + H(+). The protein operates within cell wall biogenesis; peptidoglycan biosynthesis. In terms of biological role, cell wall formation. In Rubrobacter xylanophilus (strain DSM 9941 / JCM 11954 / NBRC 16129 / PRD-1), this protein is UDP-N-acetylmuramate--L-alanine ligase.